We begin with the raw amino-acid sequence, 448 residues long: MANVVENLGKLERRVTISLPKDTVQKEIDARIQKLAKTVRMPGFRPGKVPLKMVAQQYAGQVEAEVLSDKIGQEFFTVSRAENLRVAGQPSFEPKQEQAEDAYAFDATFEVYPEVKIGDLATAEVERSTTSIGDAEIDRTLDILRKQRVHYHARGEAGEHGDGGADTAAKNGDRVTVDFVGKIEDVAFQGGTAEDFPFVLGEGRMLPEFETAALGLKVGEQRTFDLKFPDDYHGKDVAGKTAQFTVTMKKIEWPHLPEIDAEFAKSLGIEDGDLTKMRAEIKENLEREAKRRTQSIVKNQVMDALLKISELDVPKALIEQDQQRLVEMARQDLAQRGVPNAKDAPIPAEMFAEQAERRVKLGLVLAELVKANGLEAKPEQIRAEVDEFAKSYEDPKEVVRWYYSNQQRLAEMEAFVVESNVVDFVLGKAKVTDKEVSFEALASASAQA.

A PPIase FKBP-type domain is found at 172-257 (GDRVTVDFVG…MKKIEWPHLP (86 aa)).

It belongs to the FKBP-type PPIase family. Tig subfamily.

The protein resides in the cytoplasm. It carries out the reaction [protein]-peptidylproline (omega=180) = [protein]-peptidylproline (omega=0). Its function is as follows. Involved in protein export. Acts as a chaperone by maintaining the newly synthesized protein in an open conformation. Functions as a peptidyl-prolyl cis-trans isomerase. This chain is Trigger factor, found in Burkholderia cenocepacia (strain HI2424).